Here is a 317-residue protein sequence, read N- to C-terminus: Transaldolase (317 aa).

K132 serves as the catalytic Schiff-base intermediate with substrate.

The protein belongs to the transaldolase family. Type 1 subfamily. Homodimer.

It localises to the cytoplasm. The catalysed reaction is D-sedoheptulose 7-phosphate + D-glyceraldehyde 3-phosphate = D-erythrose 4-phosphate + beta-D-fructose 6-phosphate. Its pathway is carbohydrate degradation; pentose phosphate pathway; D-glyceraldehyde 3-phosphate and beta-D-fructose 6-phosphate from D-ribose 5-phosphate and D-xylulose 5-phosphate (non-oxidative stage): step 2/3. Its function is as follows. Transaldolase is important for the balance of metabolites in the pentose-phosphate pathway. The polypeptide is Transaldolase (Edwardsiella ictaluri (strain 93-146)).